The following is a 185-amino-acid chain: UPF0301 protein Tbd_2579 (185 aa).

This sequence belongs to the UPF0301 (AlgH) family.

This chain is UPF0301 protein Tbd_2579, found in Thiobacillus denitrificans (strain ATCC 25259 / T1).